A 113-amino-acid polypeptide reads, in one-letter code: Large ribosomal subunit protein bL19 (113 aa).

It belongs to the bacterial ribosomal protein bL19 family.

This protein is located at the 30S-50S ribosomal subunit interface and may play a role in the structure and function of the aminoacyl-tRNA binding site. In Rhodococcus jostii (strain RHA1), this protein is Large ribosomal subunit protein bL19.